The sequence spans 275 residues: NH(3)-dependent NAD(+) synthetase (275 aa).

ATP is bound at residue 39–46; it reads GLSGGVDS. Asp-45 serves as a coordination point for Mg(2+). Position 124 (Arg-124) interacts with deamido-NAD(+). Thr-144 contributes to the ATP binding site. Mg(2+) is bound at residue Glu-149. 2 residues coordinate deamido-NAD(+): Lys-157 and Asp-164. 2 residues coordinate ATP: Lys-173 and Ser-195. Deamido-NAD(+) is bound at residue 255–256; sequence HK.

It belongs to the NAD synthetase family. Homodimer.

The catalysed reaction is deamido-NAD(+) + NH4(+) + ATP = AMP + diphosphate + NAD(+) + H(+). It participates in cofactor biosynthesis; NAD(+) biosynthesis; NAD(+) from deamido-NAD(+) (ammonia route): step 1/1. Catalyzes the ATP-dependent amidation of deamido-NAD to form NAD. Uses ammonia as a nitrogen source. The polypeptide is NH(3)-dependent NAD(+) synthetase (Staphylothermus marinus (strain ATCC 43588 / DSM 3639 / JCM 9404 / F1)).